Here is a 196-residue protein sequence, read N- to C-terminus: Large ribosomal subunit protein bL9 (196 aa).

Residues 174 to 196 (QAAADLLEGGAGQQASEYTEAQA) form a disordered region. Polar residues predominate over residues 186 to 196 (QQASEYTEAQA).

Belongs to the bacterial ribosomal protein bL9 family.

Functionally, binds to the 23S rRNA. The sequence is that of Large ribosomal subunit protein bL9 from Phenylobacterium zucineum (strain HLK1).